We begin with the raw amino-acid sequence, 108 residues long: UPF0145 protein LCA_1282 (108 aa).

Belongs to the UPF0145 family.

The sequence is that of UPF0145 protein LCA_1282 from Latilactobacillus sakei subsp. sakei (strain 23K) (Lactobacillus sakei subsp. sakei).